The sequence spans 207 residues: Protein lin-7 homolog B (207 aa).

A Kinase interacting site motif is present at residues 1–13 (MAALVEPLGLERD). Residues 10-65 (LERDVSRAVELLERLQRSGELPPQKLQALQRVLQSRFCSAIREVYEQLYDTLDITG) form the L27 domain. The region spanning 93-175 (VVELPKTDEG…SVKLVVRYTP (83 aa)) is the PDZ domain. The interval 187 to 207 (KMRSARRRQQHQSYSSLESRG) is disordered. Over residues 197–207 (HQSYSSLESRG) the composition is skewed to polar residues.

Belongs to the lin-7 family. In terms of assembly, forms a complex with CASK and CASKIN1. Component of the brain-specific heterotrimeric complex (LIN-10-LIN-2-LIN-7 complex) composed of at least APBA1, CASK, and LIN7, which associates with the motor protein KIF17 to transport vesicles along microtubules. Forms a heterotrimeric complex composed of MMP5, LIN7B and PATJ; the N-terminal L27 domain of PALS1 interacts with the L27 domain of PATJ and the C-terminal L27 domain of PALS1 interacts with the L27 domain of LIN7B. Forms a heterotrimeric complex with DLG1 and CASK via their L27 domains. Interacts with DLG4 and GRIN2B as well as CDH1 and CTNNB1, the channels KCNJ12/Kir2.2, KCNJ4/Kir2.3 and probably KCNJ2/Kir2.1 and SLC6A12/BGT-1 via its PDZ domain. The association of LIN7A with cadherin and beta-catenin is calcium-dependent, occurs at synaptic junctions and requires the actin cytoskeleton. Interacts with EGFR, ERBB2, ERBB3 and ERBB4 with both PDZ and KID domains. Associates with KIF17 via APBA1. Interacts with ASIC3. Interacts with TOPK. Interacts with RTKN. Interacts with APBA1. Interacts with MPP7. Interacts with DLG2. Interacts with DLG3.

It is found in the cell membrane. It localises to the basolateral cell membrane. The protein localises to the cell junction. Its subcellular location is the postsynaptic density membrane. The protein resides in the tight junction. Functionally, plays a role in establishing and maintaining the asymmetric distribution of channels and receptors at the plasma membrane of polarized cells. Forms membrane-associated multiprotein complexes that may regulate delivery and recycling of proteins to the correct membrane domains. The tripartite complex composed of LIN7 (LIN7A, LIN7B or LIN7C), CASK and APBA1 associates with the motor protein KIF17 to transport vesicles containing N-methyl-D-aspartate (NMDA) receptor subunit NR2B along microtubules. This complex may have the potential to couple synaptic vesicle exocytosis to cell adhesion in brain. Ensures the proper localization of GRIN2B (subunit 2B of the NMDA receptor) to neuronal postsynaptic density and may function in localizing synaptic vesicles at synapses where it is recruited by beta-catenin and cadherin. Required to localize Kir2 channels, GABA transporter (SLC6A12) and EGFR/ERBB1, ERBB2, ERBB3 and ERBB4 to the basolateral membrane of epithelial cells. May increase the amplitude of ASIC3 acid-evoked currents by stabilizing the channel at the cell surface. This Homo sapiens (Human) protein is Protein lin-7 homolog B (LIN7B).